The chain runs to 263 residues: uncharacterized protein (263 aa).

16–23 (AKGGTGKT) serves as a coordination point for ATP.

This sequence to M.jannaschii MJ0547 and MJ0169.

This is an uncharacterized protein from Methanocaldococcus jannaschii (strain ATCC 43067 / DSM 2661 / JAL-1 / JCM 10045 / NBRC 100440) (Methanococcus jannaschii).